Here is an 86-residue protein sequence, read N- to C-terminus: Neurotoxin LmNaTx35.2 (86 aa).

An N-terminal signal peptide occupies residues 1–21 (MQLKIQLLMLVLMTVLTGVLG). The region spanning 22 to 85 (KDGYVVHEDT…VYGDKGTYCW (64 aa)) is the LCN-type CS-alpha/beta domain. 4 cysteine pairs are disulfide-bonded: Cys33–Cys84, Cys37–Cys60, Cys46–Cys65, and Cys50–Cys67.

Belongs to the long (4 C-C) scorpion toxin superfamily. Sodium channel inhibitor family. Alpha subfamily. In terms of tissue distribution, expressed by the venom gland.

The protein localises to the secreted. Functionally, binds voltage-independently at site-3 of voltage-gated sodium channels (Nav) and inhibits the inactivation of the activated channels, thereby blocking neuronal transmission. This chain is Neurotoxin LmNaTx35.2, found in Lychas mucronatus (Chinese swimming scorpion).